Here is a 198-residue protein sequence, read N- to C-terminus: Elongation factor Ts (198 aa).

Residues 82 to 85 form an involved in Mg(2+) ion dislocation from EF-Tu region; that stretch reads TDFV.

Belongs to the EF-Ts family.

The protein resides in the cytoplasm. Associates with the EF-Tu.GDP complex and induces the exchange of GDP to GTP. It remains bound to the aminoacyl-tRNA.EF-Tu.GTP complex up to the GTP hydrolysis stage on the ribosome. The polypeptide is Elongation factor Ts (Oleidesulfovibrio alaskensis (strain ATCC BAA-1058 / DSM 17464 / G20) (Desulfovibrio alaskensis)).